The primary structure comprises 483 residues: Isocitrate dehydrogenase [NADP] (483 aa).

Thr-74 contacts NADP(+). The D-threo-isocitrate site is built by Ser-83, Asn-85, Arg-89, Arg-99, and Arg-121. Asp-232 lines the Mg(2+) pocket. Residues 264–270 (HGSAPDI) and Asn-277 each bind NADP(+).

This sequence belongs to the isocitrate and isopropylmalate dehydrogenases family. In terms of assembly, homodimer. Requires Mg(2+) as cofactor. Mn(2+) serves as cofactor.

The catalysed reaction is D-threo-isocitrate + NADP(+) = 2-oxoglutarate + CO2 + NADPH. In terms of biological role, catalyzes the oxidative decarboxylation of isocitrate to 2-oxoglutarate and carbon dioxide with the concomitant reduction of NADP(+). This is Isocitrate dehydrogenase [NADP] (icd) from Rickettsia typhi (strain ATCC VR-144 / Wilmington).